The sequence spans 117 residues: Multidrug resistance protein EbrB (117 aa).

The next 4 membrane-spanning stretches (helical) occupy residues 3–23 (GLLYLALAIVSEVFGSTMLKL), 31–51 (WPIGGVIAGFLSAFTFLSFSL), 59–79 (AYATWSGVGTALTAIVGFLLF), and 81–101 (ETISLKGVFGLTLVIAGVVVL).

This sequence belongs to the drug/metabolite transporter (DMT) superfamily. Small multidrug resistance (SMR) (TC 2.A.7.1) family. EbrA/EbrB subfamily. The efflux pump is composed of EbrA and EbrB.

The protein localises to the cell membrane. Its function is as follows. Part of a multidrug efflux pump. Confers resistance to cationic lipophilic dyes such as ethidium bromide, acriflavine, pyronine Y and safranin O. The efflux is probably coupled to an influx of protons. The chain is Multidrug resistance protein EbrB (ebrB) from Bacillus atrophaeus.